The chain runs to 337 residues: Phenylalanine--tRNA ligase alpha subunit (337 aa).

Glutamate 258 contributes to the Mg(2+) binding site.

It belongs to the class-II aminoacyl-tRNA synthetase family. Phe-tRNA synthetase alpha subunit type 1 subfamily. In terms of assembly, tetramer of two alpha and two beta subunits. The cofactor is Mg(2+).

The protein localises to the cytoplasm. The catalysed reaction is tRNA(Phe) + L-phenylalanine + ATP = L-phenylalanyl-tRNA(Phe) + AMP + diphosphate + H(+). The polypeptide is Phenylalanine--tRNA ligase alpha subunit (Burkholderia vietnamiensis (strain G4 / LMG 22486) (Burkholderia cepacia (strain R1808))).